Consider the following 403-residue polypeptide: Phosphoglycerate kinase (403 aa).

Residues 21-23 (DFN), Arg-36, 59-62 (HLGR), Arg-119, and Arg-154 each bind substrate. Residues Lys-207, Gly-299, Glu-330, and 357-360 (GGDA) each bind ATP.

It belongs to the phosphoglycerate kinase family. In terms of assembly, monomer.

It is found in the cytoplasm. The catalysed reaction is (2R)-3-phosphoglycerate + ATP = (2R)-3-phospho-glyceroyl phosphate + ADP. It functions in the pathway carbohydrate degradation; glycolysis; pyruvate from D-glyceraldehyde 3-phosphate: step 2/5. The polypeptide is Phosphoglycerate kinase (Chlamydia trachomatis serovar A (strain ATCC VR-571B / DSM 19440 / HAR-13)).